Consider the following 193-residue polypeptide: dTTP/UTP pyrophosphatase (193 aa).

The active-site Proton acceptor is the Asp-71.

Belongs to the Maf family. YhdE subfamily. It depends on a divalent metal cation as a cofactor.

It is found in the cytoplasm. The enzyme catalyses dTTP + H2O = dTMP + diphosphate + H(+). It catalyses the reaction UTP + H2O = UMP + diphosphate + H(+). Nucleoside triphosphate pyrophosphatase that hydrolyzes dTTP and UTP. May have a dual role in cell division arrest and in preventing the incorporation of modified nucleotides into cellular nucleic acids. The sequence is that of dTTP/UTP pyrophosphatase from Dictyoglomus turgidum (strain DSM 6724 / Z-1310).